We begin with the raw amino-acid sequence, 444 residues long: Adenylyltransferase and sulfurtransferase UBA4 (444 aa).

ATP contacts are provided by residues G81, D102, 109-113, K126, and 170-171; these read SNLHR and DT. Zn(2+) contacts are provided by C212 and C215. C229 acts as the Glycyl thioester intermediate; for adenylyltransferase activity in catalysis. The Zn(2+) site is built by C290 and C293. Residues 343-442 enclose the Rhodanese domain; it reads KTKPYVLLDV…YIDEINPSLP (100 aa). C401 functions as the Cysteine persulfide intermediate; for sulfurtransferase activity in the catalytic mechanism.

This sequence in the N-terminal section; belongs to the HesA/MoeB/ThiF family. UBA4 subfamily. Zn(2+) is required as a cofactor.

It is found in the cytoplasm. It localises to the cytosol. The protein operates within tRNA modification; 5-methoxycarbonylmethyl-2-thiouridine-tRNA biosynthesis. Plays a central role in 2-thiolation of mcm(5)S(2)U at tRNA wobble positions of cytosolic tRNA(Lys), tRNA(Glu) and tRNA(Gln). Acts by mediating the C-terminal thiocarboxylation of sulfur carrier URM1. Its N-terminus first activates URM1 as acyl-adenylate (-COAMP), then the persulfide sulfur on the catalytic cysteine is transferred to URM1 to form thiocarboxylation (-COSH) of its C-terminus. The reaction probably involves hydrogen sulfide that is generated from the persulfide intermediate and that acts as a nucleophile towards URM1. Subsequently, a transient disulfide bond is formed. Does not use thiosulfate as sulfur donor; NFS1 probably acting as a sulfur donor for thiocarboxylation reactions. Prior mcm(5) tRNA modification by the elongator complex is required for 2-thiolation. May also be involved in protein urmylation. The protein is Adenylyltransferase and sulfurtransferase UBA4 of Kluyveromyces lactis (strain ATCC 8585 / CBS 2359 / DSM 70799 / NBRC 1267 / NRRL Y-1140 / WM37) (Yeast).